The primary structure comprises 233 residues: Ribosomal RNA-processing protein 14-C (233 aa).

Residues 32–65 (DRALLLQRRKEKAKARAEAKKLAKKESKAKQESK) adopt a coiled-coil conformation. Basic and acidic residues predominate over residues 47–64 (RAEAKKLAKKESKAKQES). Disordered regions lie at residues 47-87 (RAEA…DNHK), 130-149 (KRRIESMDEEKRRKIEESDK), and 164-233 (DNEQ…SKKK). S75 carries the phosphoserine modification. A coiled-coil region spans residues 122–223 (ALKHLEAKKR…ESKKSKKGKA (102 aa)). 2 stretches are compositionally biased toward basic and acidic residues: residues 133–149 (IESMDEEKRRKIEESDK) and 180–209 (KKKSSDAWKERKDNEKKAMLMRQQRREENL). Over residues 210-233 (KKRRESKKSKKGKAPKKKKPSKKK) the composition is skewed to basic residues.

Belongs to the SURF6 family. As to quaternary structure, component of the 90S and 60S pre-ribosomal particles.

It is found in the nucleus. It localises to the nucleolus. Functionally, involved in ribosome biogenesis and cell polarity. Required for the synthesis of both 40S and 60S ribosomal subunits and may also play some direct role in correct positioning of the mitotic spindle during mitosis. This is Ribosomal RNA-processing protein 14-C (rrp14c) from Schizosaccharomyces pombe (strain 972 / ATCC 24843) (Fission yeast).